Reading from the N-terminus, the 499-residue chain is Taxadiene 5-alpha hydroxylase (499 aa).

A helical; Signal-anchor transmembrane segment spans residues 22 to 42 (TESFSIALSAIAGILLLLLLF). Residue cysteine 445 coordinates heme.

It belongs to the cytochrome P450 family. Requires heme as cofactor.

It localises to the membrane. It catalyses the reaction taxa-4(5),11(12)-diene + reduced [NADPH--hemoprotein reductase] + O2 = taxa-4(20),11-dien-5alpha-ol + oxidized [NADPH--hemoprotein reductase] + H2O + H(+). Its pathway is alkaloid biosynthesis; taxol biosynthesis; taxa-4(20),11-dien-5alpha-ol from geranylgeranyl diphosphate: step 2/2. In terms of biological role, catalyzes the first oxygenation step of taxol biosynthesis. Can use both taxa-4(5),11(12)-diene and taxa-4(20),11(12)-diene as substrate. The chain is Taxadiene 5-alpha hydroxylase from Taxus cuspidata (Japanese yew).